A 273-amino-acid polypeptide reads, in one-letter code: NAD(P)H-hydrate epimerase (273 aa).

The YjeF N-terminal domain occupies 52–260; sequence AQQIDQELFN…GIIQKYELNL (209 aa). 105–109 serves as a coordination point for (6S)-NADPHX; that stretch reads NNGGD. Positions 106 and 170 each coordinate K(+). (6S)-NADPHX-binding positions include 174 to 180 and aspartate 203; that span reads GFSFKGE. Residue serine 206 coordinates K(+).

This sequence belongs to the NnrE/AIBP family. It depends on K(+) as a cofactor.

The enzyme catalyses (6R)-NADHX = (6S)-NADHX. It catalyses the reaction (6R)-NADPHX = (6S)-NADPHX. In terms of biological role, catalyzes the epimerization of the S- and R-forms of NAD(P)HX, a damaged form of NAD(P)H that is a result of enzymatic or heat-dependent hydration. This is a prerequisite for the S-specific NAD(P)H-hydrate dehydratase to allow the repair of both epimers of NAD(P)HX. This chain is NAD(P)H-hydrate epimerase, found in Branchiostoma floridae (Florida lancelet).